Here is a 159-residue protein sequence, read N- to C-terminus: Phosphopantetheine adenylyltransferase (159 aa).

Residue Ser8 coordinates substrate. Residues 8-9 and His16 contribute to the ATP site; that span reads SF. Substrate contacts are provided by Lys40, Val72, and Arg86. ATP contacts are provided by residues 87-89, Glu97, and 122-128; these read GVR and YAALRSS.

It belongs to the bacterial CoaD family. In terms of assembly, homohexamer. Requires Mg(2+) as cofactor.

The protein resides in the cytoplasm. The catalysed reaction is (R)-4'-phosphopantetheine + ATP + H(+) = 3'-dephospho-CoA + diphosphate. Its pathway is cofactor biosynthesis; coenzyme A biosynthesis; CoA from (R)-pantothenate: step 4/5. Functionally, reversibly transfers an adenylyl group from ATP to 4'-phosphopantetheine, yielding dephospho-CoA (dPCoA) and pyrophosphate. The protein is Phosphopantetheine adenylyltransferase of Treponema pallidum (strain Nichols).